Consider the following 568-residue polypeptide: Phosphoprotein (568 aa).

The interval 1 to 24 is disordered; that stretch reads MDQDAFFFERDPEAEGEAPRKQES. Residues 7–24 are compositionally biased toward basic and acidic residues; the sequence is FFERDPEAEGEAPRKQES. The interval 33–41 is N0 binding; it reads DVVLSYKPT. The interval 45 to 324 is disordered; it reads EDRSWLHGII…ANEEETSNTS (280 aa). 3 stretches are compositionally biased toward basic and acidic residues: residues 56 to 105, 132 to 144, and 151 to 167; these read NPKE…HARI, RNTR…PNER, and LTDE…KREE. A compositionally biased stretch (polar residues) spans 190 to 208; it reads RTNNNGRSMETSSTHSTRI. Basic and acidic residues predominate over residues 239 to 253; sequence TRSERTQNSELHKST. The span at 294 to 305 shows a compositional bias: polar residues; the sequence is YTMNNANNNTKS. The multimerization stretch occupies residues 344-411; the sequence is FELSRSASHV…SSRDLHKRFS (68 aa). Residues 387-416 adopt a coiled-coil conformation; sequence EENRTLLKQIQEEINSSRDLHKRFSEYQKE. A l protein binding region spans residues 412-445; that stretch reads EYQKEQNSLMMANLSTLHIITDRGGKTGDPSDTT. Residues 434-455 form a disordered region; it reads RGGKTGDPSDTTRSPSVFTKGK. Residues 441–450 are compositionally biased toward polar residues; the sequence is PSDTTRSPSV. Residues 479 to 568 form an interaction with the nucleocapsid (N-RNA) region; the sequence is DLIREDELRD…FEEDIDSLTN (90 aa).

Belongs to the respirovirus P protein family. Homotetramer. Interacts (via multimerization domain) with polymerase L; this interaction forms the polymerase complex. Interacts (via N-terminus) with N0; this interaction allows P to chaperon N0 before encapsidation and form the N-P complex. Interacts (via C-terminus) with N-RNA template; this interaction positions the polymerase on the template.

Its function is as follows. Essential cofactor of the RNA polymerase L that plays a central role in the transcription and replication by forming the polymerase complex with RNA polymerase L and recruiting L to the genomic N-RNA template for RNA synthesis. Also plays a central role in the encapsidation of nascent RNA chains by forming the encapsidation complex with the nucleocapsid protein N (N-P complex). Acts as a chaperone for newly synthesized free N protein, so-called N0, allowing encapsidation of nascent RNA chains during replication. The nucleoprotein protein N prevents excessive phosphorylation of P, which leads to down-regulation of viral transcription/ replication. Participates, together with N, in the formation of viral factories (viroplasms), which are large inclusions in the host cytoplasm where replication takes place. Recruits host PI4KB and remodel the host endoplasmic reticulum membrane to form viral replication factories. The chain is Phosphoprotein (P/C) from Human parainfluenza 1 virus (strain C35) (HPIV-1).